Here is a 451-residue protein sequence, read N- to C-terminus: uncharacterized protein (451 aa).

Disordered regions lie at residues 89-150 and 164-222; these read PRLS…ISRY and QVGE…KTFG. Residues 104–121 show a composition bias toward polar residues; that stretch reads QKPTISRESFVWESSASI. The segment covering 137–147 has biased composition (low complexity); sequence SSTPSIEPESI. Residues 175–222 are compositionally biased toward basic and acidic residues; sequence RAADSENERRPSEVREAPESRRRRETSETGSDKSKAPPPIKEIKKTFG. A helical transmembrane segment spans residues 358–376; it reads LIGLMLFQTTIFIISKIIA. The disordered stretch occupies residues 401–451; it reads RNGSSSGFASGTSSPLVFIPRTKRPSLVPSEKKMRGPSVTRDLAAEQERDA. The span at 403 to 414 shows a compositional bias: low complexity; that stretch reads GSSSGFASGTSS.

It belongs to the IIV-6 067R family.

The protein localises to the membrane. This is an uncharacterized protein from Invertebrate iridescent virus 3 (IIV-3).